Consider the following 309-residue polypeptide: tRNA-dihydrouridine(16) synthase (309 aa).

Residues 7-9 (PME) and glutamine 68 each bind FMN. Residue cysteine 98 is the Proton donor of the active site. FMN is bound by residues arginine 137, asparagine 198, and 220-221 (GC).

Belongs to the Dus family. DusC subfamily. It depends on FMN as a cofactor.

The catalysed reaction is 5,6-dihydrouridine(16) in tRNA + NADP(+) = uridine(16) in tRNA + NADPH + H(+). It carries out the reaction 5,6-dihydrouridine(16) in tRNA + NAD(+) = uridine(16) in tRNA + NADH + H(+). In terms of biological role, catalyzes the synthesis of 5,6-dihydrouridine (D), a modified base found in the D-loop of most tRNAs, via the reduction of the C5-C6 double bond in target uridines. Specifically modifies U16 in tRNAs. This Azotobacter vinelandii protein is tRNA-dihydrouridine(16) synthase.